A 125-amino-acid polypeptide reads, in one-letter code: Large ribosomal subunit protein bL12 (125 aa).

Belongs to the bacterial ribosomal protein bL12 family. As to quaternary structure, homodimer. Part of the ribosomal stalk of the 50S ribosomal subunit. Forms a multimeric L10(L12)X complex, where L10 forms an elongated spine to which 2 to 4 L12 dimers bind in a sequential fashion. Binds GTP-bound translation factors.

Forms part of the ribosomal stalk which helps the ribosome interact with GTP-bound translation factors. Is thus essential for accurate translation. This Gluconacetobacter diazotrophicus (strain ATCC 49037 / DSM 5601 / CCUG 37298 / CIP 103539 / LMG 7603 / PAl5) protein is Large ribosomal subunit protein bL12.